The following is a 531-amino-acid chain: MPVTMSQAFIDNFLGNSPKWFKIAILSFLVINPIVFYLNPFVAGWLLVVEFIFTLAMALKCYPLQPGGLLAIEAVIIGMTSPSQVLHEIEANLEVLLLLIFMVAGIYFMKQLLLFVFTKMITKIRSKVVVSLMFCIASAFLSAFLDALTVIAVIIAVAVGFYSIYHKVASGKSFTDDHDHTSDSHGEGHSLCEDELEAFRGFLRNLLMHAGIGTALGGVCTMVGEPQNLIIAAQANWQFGEFALRMGPVTVPVFISGIATCFLVEKFKWFGYGQQLPEAVHKILSDYASYEDAHRTKHDKIKLVIQAFVGVWLIVGLAFHLASVGLIGLSVIILTTAFNGVTNEHALGKAFEEALPFTALLAVFFAIVGVIIDQQLFAPVIQWALSYEGNTQLVIFYIANGLLSMVSDNVFVGTVYINEVKAALLDGQITRDQFDLLAVAINTGTNLPSVATPNGQAAFLFLLTSAIAPLIRLSYGRMVWMALPYTIVLSIVGILAIETGFLGEMTQYFYDSHMLIHHSVAEAAKGAVTGH.

11 helical membrane-spanning segments follow: residues 23–45, 66–86, 97–117, 130–164, 206–226, 244–264, 307–327, 352–372, 393–413, 451–471, and 478–498; these read IAILSFLVINPIVFYLNPFVAGW, PGGLLAIEAVIIGMTSPSQVL, LLLIFMVAGIYFMKQLLLFVF, VSLMFCIASAFLSAFLDALTVIAVIIAVAVGFYSI, LLMHAGIGTALGGVCTMVGEP, LRMGPVTVPVFISGIATCFLV, AFVGVWLIVGLAFHLASVGLI, EEALPFTALLAVFFAIVGVII, LVIFYIANGLLSMVSDNVFVG, ATPNGQAAFLFLLTSAIAPLI, and MVWMALPYTIVLSIVGILAIE.

It belongs to the NhaB Na(+)/H(+) (TC 2.A.34) antiporter family.

It is found in the cell inner membrane. It carries out the reaction 2 Na(+)(in) + 3 H(+)(out) = 2 Na(+)(out) + 3 H(+)(in). In terms of biological role, na(+)/H(+) antiporter that extrudes sodium in exchange for external protons. This is Na(+)/H(+) antiporter NhaB from Shewanella loihica (strain ATCC BAA-1088 / PV-4).